The primary structure comprises 344 residues: Dihydroorotase (344 aa).

Zn(2+) is bound by residues histidine 14 and histidine 16. Substrate is bound by residues 16 to 18 (HLR) and asparagine 42. Positions 100, 137, and 175 each coordinate Zn(2+). Lysine 100 carries the post-translational modification N6-carboxylysine. Substrate is bound at residue histidine 137. Leucine 220 contributes to the substrate binding site. Aspartate 248 provides a ligand contact to Zn(2+). Aspartate 248 is a catalytic residue. Residues histidine 252 and alanine 264 each coordinate substrate.

The protein belongs to the metallo-dependent hydrolases superfamily. DHOase family. Class II DHOase subfamily. As to quaternary structure, homodimer. The cofactor is Zn(2+).

It catalyses the reaction (S)-dihydroorotate + H2O = N-carbamoyl-L-aspartate + H(+). It participates in pyrimidine metabolism; UMP biosynthesis via de novo pathway; (S)-dihydroorotate from bicarbonate: step 3/3. Catalyzes the reversible cyclization of carbamoyl aspartate to dihydroorotate. The protein is Dihydroorotase of Cupriavidus necator (strain ATCC 17699 / DSM 428 / KCTC 22496 / NCIMB 10442 / H16 / Stanier 337) (Ralstonia eutropha).